Consider the following 242-residue polypeptide: Purine nucleoside phosphorylase SCO2081 (242 aa).

Residues His-68, Cys-106, and His-123 each contribute to the Zn(2+) site.

It belongs to the purine nucleoside phosphorylase YfiH/LACC1 family. As to quaternary structure, homodimer. It depends on Cu(2+) as a cofactor. Zn(2+) serves as cofactor.

The enzyme catalyses adenosine + phosphate = alpha-D-ribose 1-phosphate + adenine. The catalysed reaction is S-methyl-5'-thioadenosine + phosphate = 5-(methylsulfanyl)-alpha-D-ribose 1-phosphate + adenine. It carries out the reaction inosine + phosphate = alpha-D-ribose 1-phosphate + hypoxanthine. It catalyses the reaction adenosine + H2O + H(+) = inosine + NH4(+). Purine nucleoside enzyme that catalyzes the phosphorolysis of adenosine and inosine nucleosides, yielding D-ribose 1-phosphate and the respective free bases, adenine and hypoxanthine. Also catalyzes the phosphorolysis of S-methyl-5'-thioadenosine into adenine and S-methyl-5-thio-alpha-D-ribose 1-phosphate. Also has adenosine deaminase activity. The polypeptide is Purine nucleoside phosphorylase SCO2081 (Streptomyces coelicolor (strain ATCC BAA-471 / A3(2) / M145)).